Reading from the N-terminus, the 291-residue chain is Trimeric intracellular cation channel type B (291 aa).

The Lumenal portion of the chain corresponds to 1 to 16 (MEYPWDDLTLAFSRTS). A helical transmembrane segment spans residues 17 to 33 (MFPFFDIAHYLVSVMAL). Topologically, residues 34–47 (KQRPGAVAAAWSNP) are cytoplasmic. The chain crosses the membrane as a helical span at residues 48–69 (LSSWLSAMLHCFGGGILSCILL). Topologically, residues 70-80 (AEPPLKFLTNH) are lumenal. The chain crosses the membrane as a helical span at residues 81–99 (TNILLASSIWYIVFFCPRD). At 100-103 (LVSQ) the chain is on the cytoplasmic side. Residues 104 to 122 (GYSYQPIQLLAAGMKEVTR) form a helical membrane-spanning segment. Residues Lys-118 and Arg-122 each coordinate a 1,2-diacyl-sn-glycero-3-phospho-(1D-myo-inositol-4,5-bisphosphate). Topologically, residues 123–138 (TWKIVGGVAHANGYYR) are lumenal. Residues 139-156 (NGWIVMIAVGWARGAGGA) traverse the membrane as a helical segment. Topologically, residues 157 to 179 (IITACEQLLKGDWKPEGDEWLKM) are cytoplasmic. The helical transmembrane segment at 180–197 (SFPCKVTLLGSIMFTFQH) threads the bilayer. Over 198–206 (TRHLAISKH) the chain is Lumenal. The helical transmembrane segment at 207–225 (DLMFLYTIFLVTIKVTMMM) threads the bilayer. The Cytoplasmic segment spans residues 226-291 (TKDAAVTLTP…SAKRHAKKED (66 aa)). The interval 254-291 (LSEKKAEVKPSSNGSASSASKRGTEPPSSAKRHAKKED) is disordered. Positions 264–273 (SSNGSASSAS) are enriched in low complexity.

This sequence belongs to the TMEM38 family. Homotrimer; conformation seems to be controled by binding to diacylglycerol (DAG).

It localises to the endoplasmic reticulum membrane. It carries out the reaction K(+)(in) = K(+)(out). With respect to regulation, channel activity is activated by increased cytosolic Ca(2+) levels and blocked by luminal high Ca(2+) levels. Its function is as follows. Intracellular monovalent cation channel required for maintenance of rapid intracellular calcium release. Acts as a potassium counter-ion channel that functions in synchronization with calcium release from intracellular stores. Activated by increased cytosolic Ca(2+) levels. The polypeptide is Trimeric intracellular cation channel type B (Tmem38b) (Rattus norvegicus (Rat)).